Reading from the N-terminus, the 371-residue chain is uncharacterized protein (371 aa).

The protein belongs to the Gfo/Idh/MocA family.

This is an uncharacterized protein from Synechocystis sp. (strain ATCC 27184 / PCC 6803 / Kazusa).